The primary structure comprises 401 residues: Ribosomal RNA dihydrouridine synthase (401 aa).

Positions 15, 34, 35, 41, 47, 52, 132, 371, and 384 each coordinate FAD.

It belongs to the BaiN/RdsA family. RdsA subfamily. FAD serves as cofactor.

It carries out the reaction a 5,6-dihydrouridine in mRNA + NAD(+) = a uridine in mRNA + NADH + H(+). Its function is as follows. Catalyzes the synthesis of 5,6-dihydrouridine (D) at position 2449 in 23S rRNA. This Haemophilus influenzae (strain ATCC 51907 / DSM 11121 / KW20 / Rd) protein is Ribosomal RNA dihydrouridine synthase.